The sequence spans 356 residues: DNA-directed RNA polymerase subunit alpha (356 aa).

The tract at residues 1–259 is alpha N-terminal domain (alpha-NTD); it reads MIKAAATLKS…KLMTACLTTL (259 aa). The alpha C-terminal domain (alpha-CTD) stretch occupies residues 277 to 356; sequence FVQVNYNKME…STYGIELKED (80 aa).

Belongs to the RNA polymerase alpha chain family. In plastids the minimal PEP RNA polymerase catalytic core is composed of four subunits: alpha, beta, beta', and beta''. When a (nuclear-encoded) sigma factor is associated with the core the holoenzyme is formed, which can initiate transcription.

It is found in the plastid. Its subcellular location is the chloroplast. It catalyses the reaction RNA(n) + a ribonucleoside 5'-triphosphate = RNA(n+1) + diphosphate. Its function is as follows. DNA-dependent RNA polymerase catalyzes the transcription of DNA into RNA using the four ribonucleoside triphosphates as substrates. The sequence is that of DNA-directed RNA polymerase subunit alpha from Ostreococcus tauri.